Consider the following 443-residue polypeptide: Histidinol dehydrogenase (443 aa).

Residues Y133, Q191, and N214 each coordinate NAD(+). Residues S240, Q262, and H265 each contribute to the substrate site. Zn(2+)-binding residues include Q262 and H265. Residues E329 and H330 each act as proton acceptor in the active site. The substrate site is built by H330, D363, E417, and H422. D363 contacts Zn(2+). Zn(2+) is bound at residue H422.

It belongs to the histidinol dehydrogenase family. As to quaternary structure, homodimer. It depends on Zn(2+) as a cofactor.

The enzyme catalyses L-histidinol + 2 NAD(+) + H2O = L-histidine + 2 NADH + 3 H(+). It participates in amino-acid biosynthesis; L-histidine biosynthesis; L-histidine from 5-phospho-alpha-D-ribose 1-diphosphate: step 9/9. Its function is as follows. Catalyzes the sequential NAD-dependent oxidations of L-histidinol to L-histidinaldehyde and then to L-histidine. In Yersinia pestis, this protein is Histidinol dehydrogenase.